The sequence spans 375 residues: Platelet-derived growth factor receptor-like protein (375 aa).

The first 21 residues, 1–21, serve as a signal peptide directing secretion; sequence MKFWLLLGLLLLHEALEDVAG. The tract at residues 20–63 is disordered; the sequence is AGQHSPKNKRPKEQGENRIKPTNKKAKPKIPKVKDRDSTDSTAK. A compositionally biased stretch (basic residues) spans 40–50; it reads PTNKKAKPKIP. An Ig-like C2-type 1 domain is found at 47–159; it reads PKIPKVKDRD…GYICRRDEAK (113 aa). A disulfide bridge links Cys96 with Cys143. Asn219 carries N-linked (GlcNAc...) asparagine glycosylation. The Ig-like C2-type 2 domain occupies 272–375; that stretch reads PSTTILASSN…TTVATTVEFS (104 aa). Cys293 and Cys357 are disulfide-bonded.

In terms of assembly, forms a complex composed of PDGFRL, TNK2 and GRB2.

Its subcellular location is the secreted. This Mus musculus (Mouse) protein is Platelet-derived growth factor receptor-like protein (Pdgfrl).